A 244-amino-acid polypeptide reads, in one-letter code: Transforming protein v-Fos/v-Fox (244 aa).

The tract at residues Asp1 to Gly236 is transforming protein v-Fos. One can recognise a bZIP domain in the interval Glu113–His176. Residues Lys115–Arg135 form a basic motif region. A leucine-zipper region spans residues Leu141–Leu169. The segment at Phe237–Gln244 is transforming protein v-Fox.

This sequence belongs to the bZIP family. Fos subfamily.

It is found in the host nucleus. The protein is Transforming protein v-Fos/v-Fox (FOS-FOX) of Mus musculus (Mouse).